The sequence spans 107 residues: Ig kappa chain V-VI region TEPC 601/TEPC 191 (107 aa).

Residues 1–23 (EIVLTQSPAITAASLGQKVTITC) are framework-1. Cys-23 and Cys-87 are oxidised to a cystine. The interval 24–33 (SASSSVSYMH) is complementarity-determining-1. A framework-2 region spans residues 34–48 (WYQQKSGTSPKPWIY). The interval 49–55 (EISKLAS) is complementarity-determining-2. Positions 56–87 (GVPARFSGSGSGTSYSLTISSMEAEDAAIYYC) are framework-3. Residues 88–96 (QQWNYPLIT) form a complementarity-determining-3 region. The framework-4 stretch occupies residues 97–106 (FGAGTKLELK).

This chain is Ig kappa chain V-VI region TEPC 601/TEPC 191, found in Mus musculus (Mouse).